The primary structure comprises 397 residues: ATP phosphoribosyltransferase regulatory subunit (397 aa).

Belongs to the class-II aminoacyl-tRNA synthetase family. HisZ subfamily. In terms of assembly, heteromultimer composed of HisG and HisZ subunits.

The protein localises to the cytoplasm. It participates in amino-acid biosynthesis; L-histidine biosynthesis; L-histidine from 5-phospho-alpha-D-ribose 1-diphosphate: step 1/9. Functionally, required for the first step of histidine biosynthesis. May allow the feedback regulation of ATP phosphoribosyltransferase activity by histidine. The sequence is that of ATP phosphoribosyltransferase regulatory subunit from Nitrosococcus oceani (strain ATCC 19707 / BCRC 17464 / JCM 30415 / NCIMB 11848 / C-107).